The chain runs to 345 residues: N-acetyl-gamma-glutamyl-phosphate reductase (345 aa).

C149 is an active-site residue.

Belongs to the NAGSA dehydrogenase family. Type 1 subfamily.

It is found in the cytoplasm. It carries out the reaction N-acetyl-L-glutamate 5-semialdehyde + phosphate + NADP(+) = N-acetyl-L-glutamyl 5-phosphate + NADPH + H(+). It participates in amino-acid biosynthesis; L-arginine biosynthesis; N(2)-acetyl-L-ornithine from L-glutamate: step 3/4. Its function is as follows. Catalyzes the NADPH-dependent reduction of N-acetyl-5-glutamyl phosphate to yield N-acetyl-L-glutamate 5-semialdehyde. This Bacillus cereus (strain B4264) protein is N-acetyl-gamma-glutamyl-phosphate reductase.